We begin with the raw amino-acid sequence, 655 residues long: Large subunit GTPase 1 homolog (655 aa).

The segment at 1-31 (MGRRRAPGGGSLGRVLIRHQTQRSRSHRHTD) is disordered. The span at 16-28 (LIRHQTQRSRSHR) shows a compositional bias: basic residues. 2 positions are modified to phosphoserine: S93 and S97. In terms of domain architecture, CP-type G spans 164 to 441 (WRQLWRVIER…LCDCPGLVMP (278 aa)). 212–215 (NKAD) lines the GTP pocket. S252 bears the Phosphoserine mark. The interval 253–359 (KDEVNSVAGE…ENSQMSNKSH (107 aa)) is disordered. Positions 288-327 (EESESDDDDSEYEDCQEDEEEDWQTCSEEDSNPEEGQEEG) are enriched in acidic residues. A compositionally biased stretch (basic and acidic residues) spans 328–339 (GCDRDQKEHGPE). Over residues 344–359 (QSRASPENSQMSNKSH) the composition is skewed to polar residues. GTP is bound by residues 390–397 (GYPNVGKS) and 434–437 (DCPG). A disordered region spans residues 625 to 655 (SAENVPGKPWKKHGNRNKKEKSRRLYRHLDV). Basic residues predominate over residues 633-655 (PWKKHGNRNKKEKSRRLYRHLDV).

It belongs to the TRAFAC class YlqF/YawG GTPase family. LSG1 subfamily.

It is found in the cytoplasm. The protein resides in the endoplasmic reticulum. The protein localises to the nucleus. It localises to the cajal body. It carries out the reaction GTP + H2O = GDP + phosphate + H(+). Functions as a GTPase. May act by mediating the release of NMD3 from the 60S ribosomal subunit after export into the cytoplasm during the 60S ribosomal subunit maturation. The chain is Large subunit GTPase 1 homolog from Rattus norvegicus (Rat).